The chain runs to 322 residues: Anthranilate phosphoribosyltransferase (322 aa).

5-phospho-alpha-D-ribose 1-diphosphate is bound by residues Gly-71, 74-75 (GD), Thr-79, 81-84 (NVST), 99-107 (KFGNRSASG), and Ala-111. Gly-71 contributes to the anthranilate binding site. Ser-83 lines the Mg(2+) pocket. Asn-102 serves as a coordination point for anthranilate. An anthranilate-binding site is contributed by Arg-157. Mg(2+) is bound by residues Asp-215 and Glu-216.

It belongs to the anthranilate phosphoribosyltransferase family. As to quaternary structure, homodimer. Requires Mg(2+) as cofactor.

The enzyme catalyses N-(5-phospho-beta-D-ribosyl)anthranilate + diphosphate = 5-phospho-alpha-D-ribose 1-diphosphate + anthranilate. The protein operates within amino-acid biosynthesis; L-tryptophan biosynthesis; L-tryptophan from chorismate: step 2/5. In terms of biological role, catalyzes the transfer of the phosphoribosyl group of 5-phosphorylribose-1-pyrophosphate (PRPP) to anthranilate to yield N-(5'-phosphoribosyl)-anthranilate (PRA). This is Anthranilate phosphoribosyltransferase from Thermoplasma acidophilum (strain ATCC 25905 / DSM 1728 / JCM 9062 / NBRC 15155 / AMRC-C165).